The sequence spans 428 residues: Cholecystokinin receptor type A (428 aa).

Residues 1–41 (MDVVDSLLVNGSNITPPCELGLENETLFCLDQPRPSKEWQP) are Extracellular-facing. N-linked (GlcNAc...) asparagine glycans are attached at residues asparagine 10 and asparagine 24. Cysteine 18 and cysteine 29 form a disulfide bridge. A helical transmembrane segment spans residues 42-67 (AVQILLYSLIFLLSVLGNTLVITVLI). Over 68–77 (RNKRMRTVTN) the chain is Cytoplasmic. Residues 78–104 (IFLLSLAVSDLMLCLFCMPFNLIPNLL) form a helical membrane-spanning segment. Over 105–115 (KDFIFGSAVCK) the chain is Extracellular. Residues cysteine 114 and cysteine 196 are joined by a disulfide bond. The helical transmembrane segment at 116–137 (TTTYFMGTSVSVSTFNLVAISL) threads the bilayer. Over 138-157 (ERYGAICKPLQSRVWQTKSH) the chain is Cytoplasmic. A helical transmembrane segment spans residues 158–178 (ALKVIAATWCLSFTIMTPYPI). The Extracellular portion of the chain corresponds to 179 to 210 (YSNLVPFTKNNNQTANMCRFLLPNDVMQQSWH). Asparagine 190 carries N-linked (GlcNAc...) asparagine glycosylation. The chain crosses the membrane as a helical span at residues 211 to 234 (TFLLLILFLIPGIVMMVAYGLISL). The Cytoplasmic portion of the chain corresponds to 235–313 (ELYQGIKFEA…NLMAKKRVIR (79 aa)). Positions 248–272 (KSAKERKPSTTSSGKYEDSDGCYLQ) are disordered. Residues 314 to 334 (MLIVIVVLFFLCWMPIFSANA) traverse the membrane as a helical segment. At 335 to 349 (WRAYDTASAERRLSG) the chain is on the extracellular side. Residues 350 to 373 (TPISFILLLSYTSSCVNPIIYCFM) traverse the membrane as a helical segment. At 374 to 428 (NKRFRLGFMATFPCCPNPGPPGARGEVGEEEEGGTTGASLSRFSYSHMSASVPPQ) the chain is on the cytoplasmic side. Cysteine 387 carries the S-palmitoyl cysteine lipid modification. The interval 394-428 (PGARGEVGEEEEGGTTGASLSRFSYSHMSASVPPQ) is disordered. Polar residues predominate over residues 411-422 (ASLSRFSYSHMS).

The protein belongs to the G-protein coupled receptor 1 family.

Its subcellular location is the cell membrane. Receptor for cholecystokinin. Mediates pancreatic growth and enzyme secretion, smooth muscle contraction of the gall bladder and stomach. Has a 1000-fold higher affinity for CCK rather than for gastrin. It modulates feeding and dopamine-induced behavior in the central and peripheral nervous system. This receptor mediates its action by association with G proteins that activate a phosphatidylinositol-calcium second messenger system. The chain is Cholecystokinin receptor type A (CCKAR) from Homo sapiens (Human).